Reading from the N-terminus, the 833-residue chain is Leucine--tRNA ligase (833 aa).

The 'HIGH' region motif lies at 41-52 (PYPSGAGLHVGH). A 'KMSKS' region motif is present at residues 610 to 614 (KMSKS). Lys613 contributes to the ATP binding site.

Belongs to the class-I aminoacyl-tRNA synthetase family.

The protein resides in the cytoplasm. The enzyme catalyses tRNA(Leu) + L-leucine + ATP = L-leucyl-tRNA(Leu) + AMP + diphosphate. The polypeptide is Leucine--tRNA ligase (Streptococcus suis (strain 05ZYH33)).